The sequence spans 240 residues: Biotin--[acetyl-CoA-carboxylase] ligase (240 aa).

The 176-residue stretch at 1–176 (MLARTDSTNA…AFARWQAQLD (176 aa)) folds into the BPL/LPL catalytic domain. Residues 7 to 9 (STN), Gln30, 34 to 36 (RGR), and Lys102 each bind biotin.

The protein belongs to the biotin--protein ligase family.

The enzyme catalyses biotin + L-lysyl-[protein] + ATP = N(6)-biotinyl-L-lysyl-[protein] + AMP + diphosphate + H(+). Activates biotin to form biotinyl-5'-adenylate and transfers the biotin moiety to biotin-accepting proteins. The sequence is that of Biotin--[acetyl-CoA-carboxylase] ligase (birA) from Paracoccus denitrificans.